The primary structure comprises 204 residues: UPF0134 protein MPN_655 (204 aa).

The segment at 46–132 (EVENKPKIPI…FNEFKDSNNQ (87 aa)) is disordered. Pro residues predominate over residues 64-80 (SPKPLKPPKPPKPPKGP). The span at 117 to 132 (YVTRKEFNEFKDSNNQ) shows a compositional bias: basic and acidic residues.

The protein belongs to the UPF0134 family.

The protein is UPF0134 protein MPN_655 of Mycoplasma pneumoniae (strain ATCC 29342 / M129 / Subtype 1) (Mycoplasmoides pneumoniae).